A 231-amino-acid chain; its full sequence is RING finger protein 141 (231 aa).

A lipid anchor (N-myristoyl glycine) is attached at glycine 2. An RING-type zinc finger spans residues 156-193 (CCICMDGRADLILPCAHSFCQKCIDKWSDRHRNCPICR).

It is found in the membrane. May be involved in spermatogenesis. The protein is RING finger protein 141 (RNF141) of Canis lupus familiaris (Dog).